Here is a 187-residue protein sequence, read N- to C-terminus: Large ribosomal subunit protein uL22 (187 aa).

2 stretches are compositionally biased toward basic and acidic residues: residues threonine 158–lysine 168 and arginine 178–glutamate 187. The tract at residues threonine 158 to glutamate 187 is disordered.

It belongs to the universal ribosomal protein uL22 family.

The chain is Large ribosomal subunit protein uL22 (RpL17) from Anopheles gambiae (African malaria mosquito).